Consider the following 122-residue polypeptide: Large ribosomal subunit protein uL14 (122 aa).

The protein belongs to the universal ribosomal protein uL14 family. In terms of assembly, part of the 50S ribosomal subunit. Forms a cluster with proteins L3 and L19. In the 70S ribosome, L14 and L19 interact and together make contacts with the 16S rRNA in bridges B5 and B8.

Functionally, binds to 23S rRNA. Forms part of two intersubunit bridges in the 70S ribosome. In Methylobacillus flagellatus (strain ATCC 51484 / DSM 6875 / VKM B-1610 / KT), this protein is Large ribosomal subunit protein uL14.